We begin with the raw amino-acid sequence, 172 residues long: Large ribosomal subunit protein uL10 (172 aa).

It belongs to the universal ribosomal protein uL10 family. In terms of assembly, part of the ribosomal stalk of the 50S ribosomal subunit. The N-terminus interacts with L11 and the large rRNA to form the base of the stalk. The C-terminus forms an elongated spine to which L12 dimers bind in a sequential fashion forming a multimeric L10(L12)X complex.

Forms part of the ribosomal stalk, playing a central role in the interaction of the ribosome with GTP-bound translation factors. This is Large ribosomal subunit protein uL10 from Idiomarina loihiensis (strain ATCC BAA-735 / DSM 15497 / L2-TR).